We begin with the raw amino-acid sequence, 963 residues long: Pyruvate, phosphate dikinase 1, chloroplastic (963 aa).

The transit peptide at 1 to 76 (MLYIRKKMTS…GLHRETKARA (76 aa)) directs the protein to the chloroplast. Position 543 is a phosphothreonine; by PDRP1 (Thr-543). His-545 functions as the Tele-phosphohistidine intermediate in the catalytic mechanism. Substrate-binding residues include Arg-651, Arg-707, Glu-836, Gly-857, Thr-858, Asn-859, and Asp-860. A Mg(2+)-binding site is contributed by Glu-836. Asp-860 serves as a coordination point for Mg(2+). Cys-922 serves as the catalytic Proton donor.

The protein belongs to the PEP-utilizing enzyme family. As to quaternary structure, homotetramer. Interacts with RP1 and RP2. Mg(2+) serves as cofactor. In terms of processing, phosphorylation of Thr-543 in the dark inactivates the enzyme. Dephosphorylation upon light stimulation reactivates the enzyme. As to expression, isoform 1 is expressed in leaves, flowers and siliques. Isoform 2 is found in cotyledons, rosette and cauline leaves, petioles, flowers and siliques.

The protein resides in the plastid. The protein localises to the chloroplast. It localises to the cytoplasm. It catalyses the reaction pyruvate + phosphate + ATP = phosphoenolpyruvate + AMP + diphosphate + H(+). Activated by light-induced dephosphorylation. Inhibited by dark-induced phosphorylation. Both reactions are catalyzed by PDRP1. Formation of phosphoenolpyruvate. May be involved in regulating the flux of carbon into starch and fatty acids of seeds and in the remobilization of nitrogen reserves in senescing leaves. The polypeptide is Pyruvate, phosphate dikinase 1, chloroplastic (PPDK) (Arabidopsis thaliana (Mouse-ear cress)).